The following is a 718-amino-acid chain: Methionine--tRNA ligase (718 aa).

Positions 12–22 (PYANGDIHLGH) match the 'HIGH' region motif. Zn(2+)-binding residues include Cys143, Cys146, Cys156, and Cys159. The short motif at 349-353 (KMSKS) is the 'KMSKS' region element. Lys352 contributes to the ATP binding site. The interval 573–599 (AAPAAKVASSQQRHAEKQQHEAQSAET) is disordered. Residues 608–718 (DFTKVDLRIA…TGAASGMRVK (111 aa)) form the tRNA-binding domain.

This sequence belongs to the class-I aminoacyl-tRNA synthetase family. MetG type 1 subfamily. Homodimer. It depends on Zn(2+) as a cofactor.

Its subcellular location is the cytoplasm. The catalysed reaction is tRNA(Met) + L-methionine + ATP = L-methionyl-tRNA(Met) + AMP + diphosphate. Its function is as follows. Is required not only for elongation of protein synthesis but also for the initiation of all mRNA translation through initiator tRNA(fMet) aminoacylation. The polypeptide is Methionine--tRNA ligase (Aromatoleum aromaticum (strain DSM 19018 / LMG 30748 / EbN1) (Azoarcus sp. (strain EbN1))).